The sequence spans 256 residues: Pyridoxine 5'-phosphate synthase (256 aa).

Asn12 contributes to the 3-amino-2-oxopropyl phosphate binding site. 14 to 15 provides a ligand contact to 1-deoxy-D-xylulose 5-phosphate; sequence DH. 3-amino-2-oxopropyl phosphate is bound at residue Arg23. Catalysis depends on His48, which acts as the Proton acceptor. 2 residues coordinate 1-deoxy-D-xylulose 5-phosphate: Arg50 and His55. Catalysis depends on Glu75, which acts as the Proton acceptor. Residue Thr105 coordinates 1-deoxy-D-xylulose 5-phosphate. His199 (proton donor) is an active-site residue. 3-amino-2-oxopropyl phosphate is bound by residues Gly200 and 221-222; that span reads GY.

It belongs to the PNP synthase family. In terms of assembly, homooctamer; tetramer of dimers.

Its subcellular location is the cytoplasm. The enzyme catalyses 3-amino-2-oxopropyl phosphate + 1-deoxy-D-xylulose 5-phosphate = pyridoxine 5'-phosphate + phosphate + 2 H2O + H(+). It participates in cofactor biosynthesis; pyridoxine 5'-phosphate biosynthesis; pyridoxine 5'-phosphate from D-erythrose 4-phosphate: step 5/5. Its function is as follows. Catalyzes the complicated ring closure reaction between the two acyclic compounds 1-deoxy-D-xylulose-5-phosphate (DXP) and 3-amino-2-oxopropyl phosphate (1-amino-acetone-3-phosphate or AAP) to form pyridoxine 5'-phosphate (PNP) and inorganic phosphate. This chain is Pyridoxine 5'-phosphate synthase, found in Bradyrhizobium sp. (strain ORS 278).